Here is a 218-residue protein sequence, read N- to C-terminus: Large ribosomal subunit protein uL4 (218 aa).

A disordered region spans residues 46 to 102; it reads ARQGTHSTKTRGEVRGGGRKPFRQKGTGRARQGSIRAPHFTGGGISHGPKPRDYSQR. The segment covering 62 to 73 has biased composition (basic residues); that stretch reads GGRKPFRQKGTG.

The protein belongs to the universal ribosomal protein uL4 family. In terms of assembly, part of the 50S ribosomal subunit.

One of the primary rRNA binding proteins, this protein initially binds near the 5'-end of the 23S rRNA. It is important during the early stages of 50S assembly. It makes multiple contacts with different domains of the 23S rRNA in the assembled 50S subunit and ribosome. Functionally, forms part of the polypeptide exit tunnel. The polypeptide is Large ribosomal subunit protein uL4 (Corynebacterium glutamicum (strain R)).